Consider the following 248-residue polypeptide: Ribonuclease PH (248 aa).

Residues Arg86 and 124 to 126 (GTR) contribute to the phosphate site.

It belongs to the RNase PH family. In terms of assembly, homohexameric ring arranged as a trimer of dimers.

The enzyme catalyses tRNA(n+1) + phosphate = tRNA(n) + a ribonucleoside 5'-diphosphate. Its function is as follows. Phosphorolytic 3'-5' exoribonuclease that plays an important role in tRNA 3'-end maturation. Removes nucleotide residues following the 3'-CCA terminus of tRNAs; can also add nucleotides to the ends of RNA molecules by using nucleoside diphosphates as substrates, but this may not be physiologically important. Probably plays a role in initiation of 16S rRNA degradation (leading to ribosome degradation) during starvation. The protein is Ribonuclease PH of Clostridium kluyveri (strain NBRC 12016).